A 578-amino-acid chain; its full sequence is Probable lysosomal cobalamin transporter (578 aa).

Transmembrane regions (helical) follow at residues 8-28 and 46-66; these read LIWV…SVFI and IFAI…VALV. The N-linked (GlcNAc...) asparagine glycan is linked to N70. Helical transmembrane passes span 95–115 and 145–165; these read VVYY…IPFT and TITF…VPVA. Residue N168 is glycosylated (N-linked (GlcNAc...) asparagine). 6 consecutive transmembrane segments (helical) span residues 188–208, 312–332, 347–367, 375–395, 419–439, and 506–526; these read ALTF…VLYT, LLGG…MLLT, GYIL…VQAA, VIFT…IAIV, LTTA…SMVV, and FFGV…LIVV. The segment at 539-578 is disordered; sequence RQMDEDAEEAEEEGLLASTGRRLDTAWQDITGRSNRQRDS. The span at 540-552 shows a compositional bias: acidic residues; sequence QMDEDAEEAEEEG.

It belongs to the LIMR family. LMBRD1 subfamily.

It is found in the lysosome membrane. Its function is as follows. Probable lysosomal cobalamin transporter. Required to export cobalamin from lysosomes allowing its conversion to cofactors. The chain is Probable lysosomal cobalamin transporter from Aspergillus terreus (strain NIH 2624 / FGSC A1156).